A 145-amino-acid chain; its full sequence is Zinc finger C2H2 protein ECU06_1150 (145 aa).

The C2H2-type 1; atypical zinc finger occupies 35–57 (KDCARYGEAQASKHALLAHARRH). The segment at 63–85 (FECHLCGKDYTRSDPLKKHLLRH) adopts a C2H2-type 2 zinc-finger fold.

The polypeptide is Zinc finger C2H2 protein ECU06_1150 (Encephalitozoon cuniculi (strain GB-M1) (Microsporidian parasite)).